A 311-amino-acid polypeptide reads, in one-letter code: Haloalkane dehalogenase (311 aa).

Residues 30–148 (AIVFQHGNPS…WDDFPDEVAQ (119 aa)) enclose the AB hydrolase-1 domain. Catalysis depends on Asp-107, which acts as the Nucleophile. The active-site Proton donor is the Glu-131. The active-site Proton acceptor is the His-272.

This sequence belongs to the haloalkane dehalogenase family. Type 2 subfamily. In terms of assembly, monomer.

It carries out the reaction 1-haloalkane + H2O = a halide anion + a primary alcohol + H(+). Its function is as follows. Catalyzes hydrolytic cleavage of carbon-halogen bonds in halogenated aliphatic compounds, leading to the formation of the corresponding primary alcohols, halide ions and protons. This Mycolicibacterium smegmatis (strain ATCC 700084 / mc(2)155) (Mycobacterium smegmatis) protein is Haloalkane dehalogenase.